We begin with the raw amino-acid sequence, 252 residues long: MLKYLIFLAILISVVHSNGYMTIRLKSAFPLNVTVEVAEEVYFPTNKRSFNLQLKPNRVGFVSNIPVKFGRPGLVLVDCSPVEKFQIHRVTLRSIRWNTHVRSVASDNIFLPFTGFRYDIKCNRYWHGLHCDHFCNDDFARTINRRCTQNGTLGCLEGFHGPNCELPVPADSCKCQNGGKCVSSLENTWAQNGSLICECRLGHFEGKHCEKKSFNYFPKIEATTYATKDSHLARQFYNNSRVPNELATLPRL.

An N-terminal signal peptide occupies residues 1–17; it reads MLKYLIFLAILISVVHS. The region spanning 120 to 164 is the DSL domain; that stretch reads IKCNRYWHGLHCDHFCNDDFARTINRRCTQNGTLGCLEGFHGPNC. Disulfide bonds link cysteine 122/cysteine 131, cysteine 135/cysteine 147, cysteine 155/cysteine 164, cysteine 173/cysteine 181, cysteine 175/cysteine 197, and cysteine 199/cysteine 209. Residues 169-210 form the EGF-like domain; sequence PADSCKCQNGGKCVSSLENTWAQNGSLICECRLGHFEGKHCE.

May interact with lin-12/Notch receptor.

It localises to the secreted. Probable secreted Notch ligand involved in the mediation of Notch signaling. Involved in the lin-12/Notch pathway-mediated signaling of cell fate in vulval precursor cells (VPCs), acting redundantly with lag-2, apx-1 and osm-11. May also be involved in glp-1/Notch signaling. The polypeptide is Delta-like protein dsl-1 (Caenorhabditis elegans).